Reading from the N-terminus, the 484-residue chain is Acetyl-coenzyme A carboxylase carboxyl transferase subunit beta, chloroplastic (484 aa).

In terms of domain architecture, CoA carboxyltransferase N-terminal spans 223–484; it reads LWIQCDNCYG…LHAFFPLNKN (262 aa). Zn(2+) contacts are provided by Cys-227, Cys-230, Cys-243, and Cys-246. The C4-type zinc finger occupies 227–246; sequence CDNCYGLMYKKVKMNVCEQC.

The protein belongs to the AccD/PCCB family. Acetyl-CoA carboxylase is a heterohexamer composed of biotin carboxyl carrier protein, biotin carboxylase and 2 subunits each of ACCase subunit alpha and ACCase plastid-coded subunit beta (accD). Zn(2+) serves as cofactor.

It is found in the plastid. It localises to the chloroplast stroma. It carries out the reaction N(6)-carboxybiotinyl-L-lysyl-[protein] + acetyl-CoA = N(6)-biotinyl-L-lysyl-[protein] + malonyl-CoA. The protein operates within lipid metabolism; malonyl-CoA biosynthesis; malonyl-CoA from acetyl-CoA: step 1/1. Its function is as follows. Component of the acetyl coenzyme A carboxylase (ACC) complex. Biotin carboxylase (BC) catalyzes the carboxylation of biotin on its carrier protein (BCCP) and then the CO(2) group is transferred by the transcarboxylase to acetyl-CoA to form malonyl-CoA. The sequence is that of Acetyl-coenzyme A carboxylase carboxyl transferase subunit beta, chloroplastic from Crucihimalaya wallichii (Rock-cress).